Reading from the N-terminus, the 656-residue chain is DNA ligase (656 aa).

NAD(+) is bound by residues 32 to 36 (DAIYD) and 81 to 82 (SL). Residue lysine 112 is the N6-AMP-lysine intermediate of the active site. NAD(+) is bound by residues arginine 133, glutamate 167, and lysine 306. Cysteine 400, cysteine 403, cysteine 416, and cysteine 421 together coordinate Zn(2+). In terms of domain architecture, BRCT spans 577–656 (KSSSVFNNKT…ELLKRLKELD (80 aa)).

The protein belongs to the NAD-dependent DNA ligase family. LigA subfamily. It depends on Mg(2+) as a cofactor. Mn(2+) is required as a cofactor.

It carries out the reaction NAD(+) + (deoxyribonucleotide)n-3'-hydroxyl + 5'-phospho-(deoxyribonucleotide)m = (deoxyribonucleotide)n+m + AMP + beta-nicotinamide D-nucleotide.. Its function is as follows. DNA ligase that catalyzes the formation of phosphodiester linkages between 5'-phosphoryl and 3'-hydroxyl groups in double-stranded DNA using NAD as a coenzyme and as the energy source for the reaction. It is essential for DNA replication and repair of damaged DNA. The polypeptide is DNA ligase (Helicobacter pylori (strain ATCC 700392 / 26695) (Campylobacter pylori)).